The chain runs to 147 residues: Membrane-spanning 4-domains subfamily A member 6E (147 aa).

At 1 to 52 (MTSQPISNETIIMLPSNVINFSQAEKPEPTNQGQDSLKKRLQAKVKVIGVHS) the chain is on the cytoplasmic side. A helical transmembrane segment spans residues 53 to 73 (SLAGSILSALSALVGFILLSV). Topologically, residues 74 to 120 (NPAALNPASLQCKLDEKDIPTRLLLSYDYHSPYTMDCHRAKASLAGT) are extracellular. Residues 121–141 (LSLMLVSTVLEFCLAVLTAVL) traverse the membrane as a helical segment. Residues 142–147 (QWKQTV) lie on the Cytoplasmic side of the membrane.

It belongs to the MS4A family. In terms of tissue distribution, expressed by malignant and fetal tissue at very low levels.

It is found in the membrane. In terms of biological role, may be involved in signal transduction as a component of a multimeric receptor complex. In Homo sapiens (Human), this protein is Membrane-spanning 4-domains subfamily A member 6E (MS4A6E).